The sequence spans 177 residues: Large ribosomal subunit protein uL6 (177 aa).

Belongs to the universal ribosomal protein uL6 family. Part of the 50S ribosomal subunit.

This protein binds to the 23S rRNA, and is important in its secondary structure. It is located near the subunit interface in the base of the L7/L12 stalk, and near the tRNA binding site of the peptidyltransferase center. The polypeptide is Large ribosomal subunit protein uL6 (Glaesserella parasuis serovar 5 (strain SH0165) (Haemophilus parasuis)).